Consider the following 109-residue polypeptide: Hainantoxin-XVIII-7 (109 aa).

The signal sequence occupies residues 1 to 18; that stretch reads MKLSIIIIATSLVIAVVA. Positions 19-46 are excised as a propeptide; that stretch reads FPSKDSKAIENDKTEQRMEIVVQETARA. Disulfide bonds link cysteine 47–cysteine 62, cysteine 55–cysteine 68, cysteine 59–cysteine 108, and cysteine 61–cysteine 81.

Belongs to the neurotoxin 25 family. F7 subfamily. In terms of tissue distribution, expressed by the venom gland.

It localises to the secreted. Its function is as follows. Putative ion channel inhibitor. This is Hainantoxin-XVIII-7 from Cyriopagopus hainanus (Chinese bird spider).